A 901-amino-acid polypeptide reads, in one-letter code: MTTQLNINSVIENAKRVITPLSPISIFAARNPWEGLEADTFEDVAKWLRDVRDVDIFPNKALIESAVARGELDESVFNQLVTDMLLEHHYNIPQHYINLYIDNIKTLKDVPASYMNHSNVDVVADLLLEKSKRDMAESYHHYDVRPMSDAIIDEQGEPLSEQVNRQMIKWTKLYIDQFLSSWTMPKREQSFYHAWLHLAQHDHSFTKAQRQVIKGLPNDPEMTIESVLTHFSIDQEDYQAYVEGHLLALPGWAGMLYYRSQQHHFEQHLLTDYLAIRLVVEQLLVGDEFKSVAKDCESRSENWFKQTVASWCYYSDMPSDVLLQHDVNEIQTFIHFAATMNKNVFKNLWLIAWEMTYESQLKQKIKAGHESVAGALDVNQVNVSENDNANQPHSVLLNDTQAVDENNSELNQMGTSTKAQIAFCIDVRSEPFRRHIEAAGPFETIGIAGFFGLPIQKDAVDEQFKHDSLPVMVPPAYRIKEFADRYDMNVYRQQQQTMSSMFYTFKLMKNNVMPSLLLPELSGPFLSLSTIVNSIMPRKSRASLQKIKQKWLKKPETKLTIDREFDRTSDLPVGFTEQEQIDFALQALKLMDLTEAFAPFVVLAGHASHSHNNPHHASLECGACGGASSGFNAKLLAMICNRPNVRQGLKQSGVYIPETTVFAVAEHHTSTDTLAWVYVPDTLSSIALDAYESLNDAMPMISEHANRERLDKLPTIGRVNHPVEEAQRFASDWSEVRPEWGLAKNASFIIGRRQLTKGIDLEGRTFLHNYDWRKDKDGTLLNTIISGPALVAQWINLQYYASTVAPHFYGSGNKATQTVTSGVGVMQGNASDLMYGLSWQSVMAADRTMYHSPIRLLVVIQAPDYVVARLLANNEHFARKVSNHWLRLMSVNEEGRFKSWI.

Residues Cys424, Asp426, His606, and Cys621 each coordinate Zn(2+).

Belongs to the inorganic carbon transporter (TC 9.A.2) DabA family. In terms of assembly, forms a complex with DabB. Requires Zn(2+) as cofactor.

The protein resides in the cell membrane. Part of an energy-coupled inorganic carbon pump. In Staphylococcus aureus (strain NCTC 8325 / PS 47), this protein is Probable inorganic carbon transporter subunit DabA.